The following is a 187-amino-acid chain: MILKFGIERILSSPYPCPSPTISTPATSPSSISPTFASPNGTPNIASSMYPAWVFSTRYSDRPSAGPRHRKSRKRESTGSSGSSEEEKRPRTAFTGDQLDRLKTEFRESRYLTEKRRQELAHELGLNESQIKIWFQNKRAKLKKSTSSVPRDRCSSVTPNPHNHPSIHGGYQLMAQLAKVQARAYMP.

3 disordered regions span residues 14–43 (PYPC…NGTP), 60–100 (SDRP…DQLD), and 144–167 (KSTS…HPSI). Residues 20–39 (PTISTPATSPSSISPTFASP) show a composition bias toward low complexity. The segment at residues 87–146 (EKRPRTAFTGDQLDRLKTEFRESRYLTEKRRQELAHELGLNESQIKIWFQNKRAKLKKST) is a DNA-binding region (homeobox). Over residues 145–163 (STSSVPRDRCSSVTPNPHN) the composition is skewed to polar residues.

This sequence belongs to the engrailed homeobox family. Expressed in seam cells.

It is found in the nucleus. The protein localises to the cytoplasm. Transcriptional regulator which binds to DNA to regulate gene expression and promote seam cell development and differentiation during embryogenesis. Plays a role in maintaining the boundaries between the lateral rows of seam cells and the ventral and dorsal row of epidermal cells during embryonic development. Negatively regulates the expression of the fusion effector protein eff-1 to prevent seam cell fusion with the dorsal and ventral epidermal cells during embryonic elongation. Positively regulates seam cell self-renewal and expansion during the L2 larval stage to promote seam cell development. This role does not seem to be via regulation of eff-1 expression. Specifically, it is required for the asymmetric division of the V5.p seam cell during the L2 larval stage, and in turn the asymmetric nuclear distribution of pop-1 in V5.p daughter cells. The sequence is that of Homeobox protein engrailed-like ceh-16 from Caenorhabditis elegans.